The sequence spans 716 residues: Penicillin-binding protein 2A (716 aa).

The helical transmembrane segment at 22 to 42 threads the bilayer; the sequence is LNILFLAAFVIFTWIIVELGI. The active-site Acyl-ester intermediate is the serine 397. Over residues 689-706 the composition is skewed to basic and acidic residues; sequence SKQDKEGTQQKNKDKIEE. Residues 689–716 are disordered; sequence SKQDKEGTQQKNKDKIEENAENTTSSDN.

Belongs to the transpeptidase family.

Its subcellular location is the cell membrane. It is found in the forespore inner membrane. It catalyses the reaction Preferential cleavage: (Ac)2-L-Lys-D-Ala-|-D-Ala. Also transpeptidation of peptidyl-alanyl moieties that are N-acyl substituents of D-alanine.. It functions in the pathway cell wall biogenesis; peptidoglycan biosynthesis. In terms of biological role, involved in the synthesis of peptidoglycan associated with cell wall elongation, especially following spore germination. Has a partially redundant function with PBP 1 (ponA) or PBP 4 (pbpD) during spore outgrowth. Plays a redundant role with PbpH in determining the rod shape of the cell during vegetative growth and spore outgrowth. The sequence is that of Penicillin-binding protein 2A from Bacillus subtilis (strain 168).